The chain runs to 137 residues: Global transcriptional regulator Spx (137 aa).

Cys-10 and Cys-13 are oxidised to a cystine.

This sequence belongs to the ArsC family. Spx subfamily. As to quaternary structure, interacts with the C-terminal domain of the alpha subunit of the RNAP.

The protein localises to the cytoplasm. Global transcriptional regulator that plays a key role in stress response and exerts either positive or negative regulation of genes. Acts by interacting with the C-terminal domain of the alpha subunit of the RNA polymerase (RNAP). This interaction can enhance binding of RNAP to the promoter region of target genes and stimulate their transcription, or block interaction of RNAP with activator. This chain is Global transcriptional regulator Spx, found in Streptococcus mutans serotype c (strain ATCC 700610 / UA159).